The chain runs to 123 residues: Small ribosomal subunit protein uS12 (123 aa).

The disordered stretch occupies residues 1–28 (MPTIQQLIRKPRQPKVKRSKSQHLEQCP). Over residues 9-21 (RKPRQPKVKRSKS) the composition is skewed to basic residues. Position 89 is a 3-methylthioaspartic acid (Asp89).

It belongs to the universal ribosomal protein uS12 family. In terms of assembly, part of the 30S ribosomal subunit. Contacts proteins S8 and S17. May interact with IF1 in the 30S initiation complex.

Its function is as follows. With S4 and S5 plays an important role in translational accuracy. In terms of biological role, interacts with and stabilizes bases of the 16S rRNA that are involved in tRNA selection in the A site and with the mRNA backbone. Located at the interface of the 30S and 50S subunits, it traverses the body of the 30S subunit contacting proteins on the other side and probably holding the rRNA structure together. The combined cluster of proteins S8, S12 and S17 appears to hold together the shoulder and platform of the 30S subunit. In Ruegeria pomeroyi (strain ATCC 700808 / DSM 15171 / DSS-3) (Silicibacter pomeroyi), this protein is Small ribosomal subunit protein uS12.